Reading from the N-terminus, the 472-residue chain is Argininosuccinate lyase (472 aa).

It belongs to the lyase 1 family. Argininosuccinate lyase subfamily.

The protein localises to the cytoplasm. The enzyme catalyses 2-(N(omega)-L-arginino)succinate = fumarate + L-arginine. Its pathway is amino-acid biosynthesis; L-arginine biosynthesis; L-arginine from L-ornithine and carbamoyl phosphate: step 3/3. The protein is Argininosuccinate lyase of Synechococcus sp. (strain CC9605).